A 74-amino-acid polypeptide reads, in one-letter code: MSAQRFLFLLVVTSLIAASLAAPKDVQLTKRGTPCWCGKTVGIYWFALYSCPGGHGYTGHCGQFMGVCCYPADP.

The first 21 residues, 1-21 (MSAQRFLFLLVVTSLIAASLA), serve as a signal peptide directing secretion. Residues 22–29 (APKDVQLT) constitute a propeptide that is removed on maturation. Intrachain disulfides connect C35/C68, C37/C61, and C51/C69.

It belongs to the sea anemone type 3 (BDS) potassium channel toxin family.

Its subcellular location is the secreted. The protein resides in the nematocyst. In terms of biological role, potently and selectively inhibits voltage-gated potassium channels Kv11/KCNH/ERG. Acts as a gating-modifier toxin that shifts the voltage-dependence of ERG activation in the positive direction and suppresses its current amplitudes elicited by strong depolarizing pulses that maximally activate the channels. This chain is U-actitoxin-Bgr3a, found in Bunodosoma granuliferum (Red warty sea anemone).